A 930-amino-acid polypeptide reads, in one-letter code: Isoleucine--tRNA ligase (930 aa).

The short motif at 57–67 (PYANGNIHVGH) is the 'HIGH' region element. Glutamate 554 lines the L-isoleucyl-5'-AMP pocket. The 'KMSKS' region motif lies at 595-599 (KMSKS). Lysine 598 is a binding site for ATP. Zn(2+)-binding residues include cysteine 888, cysteine 891, cysteine 908, and cysteine 911.

The protein belongs to the class-I aminoacyl-tRNA synthetase family. IleS type 1 subfamily. In terms of assembly, monomer. The cofactor is Zn(2+).

Its subcellular location is the cytoplasm. It carries out the reaction tRNA(Ile) + L-isoleucine + ATP = L-isoleucyl-tRNA(Ile) + AMP + diphosphate. In terms of biological role, catalyzes the attachment of isoleucine to tRNA(Ile). As IleRS can inadvertently accommodate and process structurally similar amino acids such as valine, to avoid such errors it has two additional distinct tRNA(Ile)-dependent editing activities. One activity is designated as 'pretransfer' editing and involves the hydrolysis of activated Val-AMP. The other activity is designated 'posttransfer' editing and involves deacylation of mischarged Val-tRNA(Ile). The polypeptide is Isoleucine--tRNA ligase (Streptococcus sanguinis (strain SK36)).